The primary structure comprises 499 residues: Ethanolamine-phosphate phospho-lyase (499 aa).

Lys-278 carries the N6-(pyridoxal phosphate)lysine modification. Residues 468-479 (RDSTTDSKENPS) are compositionally biased toward basic and acidic residues. Positions 468 to 499 (RDSTTDSKENPSRKRNGMCTDTHSLLSKRLKT) are disordered.

The protein belongs to the class-III pyridoxal-phosphate-dependent aminotransferase family. In terms of assembly, homotetramer. The cofactor is pyridoxal 5'-phosphate.

It is found in the mitochondrion. It carries out the reaction phosphoethanolamine + H2O = acetaldehyde + NH4(+) + phosphate. Functionally, catalyzes the pyridoxal-phosphate-dependent breakdown of phosphoethanolamine, converting it to ammonia, inorganic phosphate and acetaldehyde. The sequence is that of Ethanolamine-phosphate phospho-lyase (ETNPPL) from Homo sapiens (Human).